The following is a 1337-amino-acid chain: Sister chromatid cohesion protein PDS5 homolog A (1337 aa).

The residue at position 1 (Met1) is an N-acetylmethionine. An HEAT repeat occupies 393 to 429 (ALVNDQLLGFVRERTLDKRWRVRKEAMMGLAQLYKKY). Ser1097 is subject to Phosphoserine. N6-acetyllysine is present on Lys1146. Residues 1150-1337 (ATGRKPYVRS…PAERQIDLQR (188 aa)) are disordered. A compositionally biased stretch (polar residues) spans 1159–1180 (STGTETGSNINVNSELNPSTGN). Phosphoserine is present on Ser1195. Thr1208 carries the phosphothreonine modification. At Lys1211 the chain carries N6-acetyllysine. A compositionally biased stretch (polar residues) spans 1223–1233 (SDQATQGNISS). Residue Lys1290 is modified to N6-acetyllysine. Ser1305 is modified (phosphoserine). Positions 1321–1337 (DLAKKAAPAERQIDLQR) are enriched in basic and acidic residues.

Belongs to the PDS5 family. Interacts with the cohesin complex. Interacts with WAPL (via FGF motifs) or CDCA5 (via the FGF motif); the interaction is direct, cohesin-dependent and competitive. Interacts with SMC3. Interacts with TP63. In terms of tissue distribution, highest level in colon. Low levels in lung, ovary, breast and kidney. Reduced level in renal tumor tissue. Isoform 2 is expressed in kidney.

Its subcellular location is the nucleus. Functionally, probable regulator of sister chromatid cohesion in mitosis which may stabilize cohesin complex association with chromatin. May couple sister chromatid cohesion during mitosis to DNA replication. Cohesion ensures that chromosome partitioning is accurate in both meiotic and mitotic cells and plays an important role in DNA repair. This is Sister chromatid cohesion protein PDS5 homolog A from Homo sapiens (Human).